The primary structure comprises 55 residues: Large ribosomal subunit protein bL33A (55 aa).

This sequence belongs to the bacterial ribosomal protein bL33 family.

This is Large ribosomal subunit protein bL33A from Mycolicibacterium vanbaalenii (strain DSM 7251 / JCM 13017 / BCRC 16820 / KCTC 9966 / NRRL B-24157 / PYR-1) (Mycobacterium vanbaalenii).